A 361-amino-acid polypeptide reads, in one-letter code: 1-deoxy-D-xylulose 5-phosphate reductoisomerase (361 aa).

NADPH contacts are provided by T12, G13, S14, I15, G38, and N102. K103 is a 1-deoxy-D-xylulose 5-phosphate binding site. E104 lines the NADPH pocket. A Mn(2+)-binding site is contributed by D126. 1-deoxy-D-xylulose 5-phosphate-binding residues include S127, E128, S152, and H175. Residue E128 participates in Mn(2+) binding. NADPH is bound at residue G181. 1-deoxy-D-xylulose 5-phosphate-binding residues include S188, N193, K194, and E197. Mn(2+) is bound at residue E197.

This sequence belongs to the DXR family. Mg(2+) serves as cofactor. Mn(2+) is required as a cofactor.

It catalyses the reaction 2-C-methyl-D-erythritol 4-phosphate + NADP(+) = 1-deoxy-D-xylulose 5-phosphate + NADPH + H(+). The protein operates within isoprenoid biosynthesis; isopentenyl diphosphate biosynthesis via DXP pathway; isopentenyl diphosphate from 1-deoxy-D-xylulose 5-phosphate: step 1/6. Catalyzes the NADPH-dependent rearrangement and reduction of 1-deoxy-D-xylulose-5-phosphate (DXP) to 2-C-methyl-D-erythritol 4-phosphate (MEP). In Leifsonia xyli subsp. xyli (strain CTCB07), this protein is 1-deoxy-D-xylulose 5-phosphate reductoisomerase.